The chain runs to 248 residues: Probable pyridoxal 5'-phosphate synthase subunit pdx2 (248 aa).

70–72 (GES) contacts L-glutamine. The active-site Nucleophile is the C106. L-glutamine is bound by residues R136 and 174–175 (IR). Catalysis depends on charge relay system residues H221 and E223.

Belongs to the glutaminase PdxT/SNO family.

The catalysed reaction is aldehydo-D-ribose 5-phosphate + D-glyceraldehyde 3-phosphate + L-glutamine = pyridoxal 5'-phosphate + L-glutamate + phosphate + 3 H2O + H(+). The enzyme catalyses L-glutamine + H2O = L-glutamate + NH4(+). Its pathway is cofactor biosynthesis; pyridoxal 5'-phosphate biosynthesis. In terms of biological role, catalyzes the hydrolysis of glutamine to glutamate and ammonia as part of the biosynthesis of pyridoxal 5'-phosphate. The resulting ammonia molecule is channeled to the active site of pdx1. In Dictyostelium discoideum (Social amoeba), this protein is Probable pyridoxal 5'-phosphate synthase subunit pdx2.